Reading from the N-terminus, the 296-residue chain is Transcription factor bHLH99 (296 aa).

Residues 99–150 (NQRMNHIAVERNRRKQMNHFLSILKSMMPLSYSQPNDQASIIEGTISYLKKL) enclose the bHLH domain.

As to quaternary structure, homodimer. Expressed constitutively in roots, stems, and flowers.

It is found in the nucleus. The sequence is that of Transcription factor bHLH99 (BHLH99) from Arabidopsis thaliana (Mouse-ear cress).